The chain runs to 611 residues: Chaperone protein DnaK (611 aa).

At Thr-173 the chain carries Phosphothreonine; by autocatalysis. A compositionally biased stretch (low complexity) spans Ala-579–Ala-592. Positions Ala-579–Asn-598 are disordered.

It belongs to the heat shock protein 70 family.

In terms of biological role, acts as a chaperone. This chain is Chaperone protein DnaK, found in Bacillus cereus (strain B4264).